A 90-amino-acid chain; its full sequence is Cell division topological specificity factor (90 aa).

This sequence belongs to the MinE family.

Prevents the cell division inhibition by proteins MinC and MinD at internal division sites while permitting inhibition at polar sites. This ensures cell division at the proper site by restricting the formation of a division septum at the midpoint of the long axis of the cell. The chain is Cell division topological specificity factor from Pelotomaculum thermopropionicum (strain DSM 13744 / JCM 10971 / SI).